A 210-amino-acid chain; its full sequence is Prolactin (210 aa).

The N-terminal stretch at 1–23 is a signal peptide; that stretch reads MAEGSRLYFAVTVLMCAFVSING. 2 disulfides stabilise this stretch: Cys69–Cys183 and Cys200–Cys210.

This sequence belongs to the somatotropin/prolactin family. As to expression, pituitary gland.

It localises to the secreted. The protein is Prolactin (prl) of Hypophthalmichthys nobilis (Bighead carp).